The following is a 562-amino-acid chain: NAD-dependent malic enzyme (562 aa).

The Proton donor role is filled by Y101. An NAD(+)-binding site is contributed by R154. The Proton acceptor role is filled by K172. A divalent metal cation contacts are provided by E243, D244, and D267. NAD(+) contacts are provided by D267 and N415.

This sequence belongs to the malic enzymes family. In terms of assembly, homotetramer. Mg(2+) is required as a cofactor. The cofactor is Mn(2+).

It catalyses the reaction (S)-malate + NAD(+) = pyruvate + CO2 + NADH. The enzyme catalyses oxaloacetate + H(+) = pyruvate + CO2. The sequence is that of NAD-dependent malic enzyme from Shewanella piezotolerans (strain WP3 / JCM 13877).